The chain runs to 406 residues: Calsequestrin-2 (406 aa).

The signal sequence occupies residues 1–19 (MKATCWILAGFCLLFCCKA). N335 is a glycosylation site (N-linked (GlcNAc...) asparagine). The segment at 365–406 (VLSGKINTEDDDDDDDDDDDDDDDDDDDDDDDDDDDDDDDDD) is disordered. Residues 373 to 406 (EDDDDDDDDDDDDDDDDDDDDDDDDDDDDDDDDD) are compositionally biased toward acidic residues.

It belongs to the calsequestrin family. As to expression, skeletal and heart muscle.

Its subcellular location is the sarcoplasmic reticulum lumen. Its function is as follows. Calsequestrin is a high-capacity, moderate affinity, calcium-binding protein and thus acts as an internal calcium store in muscle. Calcium ions are bound by clusters of acidic residues at the protein surface, especially at the interface between subunits. Can bind around 60 Ca(2+) ions. Regulates the release of lumenal Ca(2+) via the calcium release channel RYR2; this plays an important role in triggering muscle contraction. Plays a role in excitation-contraction coupling in the heart and in regulating the rate of heart beats. The chain is Calsequestrin-2 (CASQ2) from Gallus gallus (Chicken).